The sequence spans 233 residues: C-type lectin domain family 2 member D5 (233 aa).

Residues 1 to 52 form a disordered region; sequence MPSSAHLQDPPPLLSRTLTQNEGQTSLRQSSSCGPSAASASESLSGSTESRI. Over 1 to 76 the chain is Cytoplasmic; the sequence is MPSSAHLQDP…PLEYPAGLYC (76 aa). Polar residues predominate over residues 16–29; that stretch reads RTLTQNEGQTSLRQ. The segment covering 30 to 50 has biased composition (low complexity); it reads SSSCGPSAASASESLSGSTES. A helical; Signal-anchor for type II membrane protein membrane pass occupies residues 77-97; that stretch reads CYVVIIVLSVAVVALSVALSV. Topologically, residues 98–233 are extracellular; that stretch reads KKTAQISTIN…KPNSYTSQCL (136 aa). The 110-residue stretch at 119 to 228 folds into the C-type lectin domain; that stretch reads VGNKCFYFNE…KSICRKPNSY (110 aa). An N-linked (GlcNAc...) asparagine glycan is attached at Asn-132.

Its subcellular location is the cell membrane. Lectin-type cell surface receptor. In Rattus norvegicus (Rat), this protein is C-type lectin domain family 2 member D5 (Ocil).